A 192-amino-acid chain; its full sequence is MATKIRLQRHGRKGYAFYKIVVADSRAPRDGKFIERIGSYNPNTNPATIDLNFERALYWIGVGAQPTDTARNILSREGVLMMKHLLGGVKKGAFDQAAAESKFEAWLKGKKDALNNMKAKVKEAAVADDKVKLEAEKAVNKARAEAVAEKKAAEAKAKAEAEAAAAAEEATETEETPMEAAAEEAPAAESAE.

Basic and acidic residues predominate over residues Glu-149–Ala-161. The disordered stretch occupies residues Glu-149–Glu-192. Low complexity predominate over residues Met-178–Glu-192.

This sequence belongs to the bacterial ribosomal protein bS16 family.

This is Small ribosomal subunit protein bS16 from Porphyromonas gingivalis (strain ATCC 33277 / DSM 20709 / CIP 103683 / JCM 12257 / NCTC 11834 / 2561).